The sequence spans 493 residues: Na(+)/H(+) antiporter subunit D (493 aa).

A run of 15 helical transmembrane segments spans residues 3–23 (NFVI…IFMT), 31–51 (IFST…VQTV), 77–97 (FASL…LYSF), 107–127 (SFYY…FLTG), 129–149 (LFNM…LIVL), 163–183 (IVFN…LYAV), 203–223 (GLIT…GGIF), 227–247 (FWLP…FGAL), 251–271 (VGLY…TAFT), 274–294 (LMIW…LAYS), 299–319 (IVIY…AVHT), 330–350 (LIHD…LIAL), 370–390 (GWMF…SGFV), 407–427 (ISML…RIFI), and 449–469 (LYPA…TEWV).

This sequence belongs to the CPA3 antiporters (TC 2.A.63) subunit D family. As to quaternary structure, forms a heterooligomeric complex that consists of seven subunits: MrpA, MrpB, MrpC, MrpD, MrpE, MrpF and MrpG.

It is found in the cell membrane. Mrp complex is a Na(+)/H(+) antiporter that is considered to be the major Na(+) excretion system in B.subtilis. Has a major role in Na(+) resistance and a minor role in Na(+)- and K(+)-dependent pH homeostasis as compared to TetB. MrpA may be the actual Na(+)/H(+) antiporter, although the six other Mrp proteins are all required for Na(+)/H(+) antiport activity and Na(+) resistance. MrpA is required for initiation of sporulation when external Na(+) concentration increases. Also transports Li(+) but not K(+), Ca(2+) or Mg(2+). The protein is Na(+)/H(+) antiporter subunit D (mrpD) of Bacillus subtilis (strain 168).